A 191-amino-acid chain; its full sequence is Ribosomal RNA small subunit methyltransferase G (191 aa).

S-adenosyl-L-methionine is bound by residues Gly62, Phe67, 111 to 112, and Arg124; that span reads IE.

It belongs to the methyltransferase superfamily. RNA methyltransferase RsmG family.

It localises to the cytoplasm. It carries out the reaction guanosine(527) in 16S rRNA + S-adenosyl-L-methionine = N(7)-methylguanosine(527) in 16S rRNA + S-adenosyl-L-homocysteine. Specifically methylates the N7 position of guanine in position 527 of 16S rRNA. This Rickettsia akari (strain Hartford) protein is Ribosomal RNA small subunit methyltransferase G.